The following is an 802-amino-acid chain: Sucrose synthase 1 (802 aa).

The segment at 272 to 749 (MMFNVVILSP…GLQRIYEKYT (478 aa)) is GT-B glycosyltransferase.

This sequence belongs to the glycosyltransferase 1 family. Plant sucrose synthase subfamily.

It catalyses the reaction an NDP-alpha-D-glucose + D-fructose = a ribonucleoside 5'-diphosphate + sucrose + H(+). Its function is as follows. Sucrose-cleaving enzyme that provides UDP-glucose and fructose for various metabolic pathways. Most active in the sink tissues where it is responsible for the breakdown of the arriving sucrose. The sequence is that of Sucrose synthase 1 (SH-1) from Zea mays (Maize).